The chain runs to 64 residues: Large ribosomal subunit protein bL35 (64 aa).

A compositionally biased stretch (basic residues) spans 1–26; sequence MPKMKSHRGASKRFKRTASGKLKRSH. The interval 1 to 42 is disordered; sequence MPKMKSHRGASKRFKRTASGKLKRSHAYTSHLFANKSTKAKR.

This sequence belongs to the bacterial ribosomal protein bL35 family.

This is Large ribosomal subunit protein bL35 from Exiguobacterium sp. (strain ATCC BAA-1283 / AT1b).